The following is a 137-amino-acid chain: Large ribosomal subunit protein uL24 (137 aa).

It belongs to the universal ribosomal protein uL24 family. In terms of assembly, part of the 50S ribosomal subunit.

Functionally, one of two assembly initiator proteins, it binds directly to the 5'-end of the 23S rRNA, where it nucleates assembly of the 50S subunit. In terms of biological role, located at the polypeptide exit tunnel on the outside of the subunit. This Sulfurisphaera tokodaii (strain DSM 16993 / JCM 10545 / NBRC 100140 / 7) (Sulfolobus tokodaii) protein is Large ribosomal subunit protein uL24.